The sequence spans 105 residues: Heat shock protein HspQ (105 aa).

The disordered stretch occupies residues 77–105 (MRDEHPEQPSMDELARTIRKQLQAPRLRN).

Belongs to the HspQ family.

It is found in the cytoplasm. Its function is as follows. Involved in the degradation of certain denaturated proteins, including DnaA, during heat shock stress. The protein is Heat shock protein HspQ of Salmonella arizonae (strain ATCC BAA-731 / CDC346-86 / RSK2980).